An 869-amino-acid polypeptide reads, in one-letter code: Facilitated trehalose transporter Tret1 (869 aa).

Disordered regions lie at residues 1-214 (MSGR…QKAT) and 258-315 (KESS…LIHR). At 1 to 404 (MSGRDNRGAG…VYRPTTNPIY (404 aa)) the chain is on the cytoplasmic side. Basic and acidic residues predominate over residues 25–43 (KLKEKLTRAGDDQGYHRVE). 3 stretches are compositionally biased toward low complexity: residues 44–57 (SNLSTSNTATSLDT), 79–92 (PQQQQQQQQRQQLR), and 118–127 (PFQQQQQRTP). 2 stretches are compositionally biased toward basic and acidic residues: residues 147 to 156 (EIREHRDRQQ) and 258 to 291 (KESSSEEEFHKTRREFQGRKHQSLDPRVTFKLDK). 5 positions are modified to phosphoserine: serine 260, serine 261, serine 262, serine 332, and serine 334. The disordered stretch occupies residues 336-368 (EDFHTSRQHFQQQRSISTDSRKSRRPYEMDEMG). A compositionally biased stretch (polar residues) spans 343–353 (QHFQQQRSIST). Positions 354–368 (DSRKSRRPYEMDEMG) are enriched in basic and acidic residues. A helical transmembrane segment spans residues 405 to 425 (IWTQVLAALSVSLGSLVVGFV). Residues 426-452 (SAYTSPALVSMTNRNMTSFEVTPQAAS) lie on the Extracellular side of the membrane. Asparagine 440 carries an N-linked (GlcNAc...) asparagine glycan. A helical transmembrane segment spans residues 453-473 (WVGGIMPLAGLAGGIAGGPFI). Residues 474 to 485 (EYLGRRNTILAT) lie on the Cytoplasmic side of the membrane. Residues 486–506 (AIPFIVSSLLIACAVNVAMVL) traverse the membrane as a helical segment. Residues 507-509 (AGR) are Extracellular-facing. A helical membrane pass occupies residues 510 to 530 (FLAGFCVGIASLSLPVYLGET). At 531–536 (VQPEVR) the chain is on the cytoplasmic side. Residues 537-557 (GTLGLLPTAFGNIGILLCFVA) form a helical membrane-spanning segment. The Extracellular portion of the chain corresponds to 558-564 (GTYMDWS). Residues 565–585 (MLAFLGAALPVPFLILMFLIP) form a helical membrane-spanning segment. The Cytoplasmic portion of the chain corresponds to 586 to 654 (ETPRWFVSRG…NLKPLSISLG (69 aa)). A helical membrane pass occupies residues 655 to 675 (LMFFQQLSGINAVIFYTVSIF). The Extracellular segment spans residues 676-685 (KDAGSTIDGN). A helical membrane pass occupies residues 686 to 706 (LCTIIVGIVNFMATFIATLLI). Over 707-712 (DRAGRK) the chain is Cytoplasmic. Residues 713-733 (ILLYVSNIAMIITLFVLGGFF) form a helical membrane-spanning segment. Topologically, residues 734-752 (YCKSHGQDVSQLGWLPLSC) are extracellular. Residues 753–773 (FVIYILGFSLGFGPIPWLMMG) traverse the membrane as a helical segment. The Cytoplasmic segment spans residues 774–779 (EILPSK). A helical transmembrane segment spans residues 780-800 (IRGSAASVATAFNWSCTFVVT). Over 801–813 (KTFQDMIDFMGAH) the chain is Extracellular. The chain crosses the membrane as a helical span at residues 814–834 (GAFWLFGSICFIGLFFVILYV). Residues 835–869 (PETQGKTLEDIERKMMGRVRRMSSVANMKPLAFNM) are Cytoplasmic-facing. Serine 857 and serine 858 each carry phosphoserine.

It belongs to the major facilitator superfamily. Sugar transporter (TC 2.A.1.1) family. Trehalose transporter subfamily.

Its subcellular location is the cell membrane. Its function is as follows. Low-capacity facilitative transporter for trehalose. Does not transport maltose, sucrose or lactose. Mediates the bidirectional transfer of trehalose. Responsible for the transport of trehalose synthesized in the fat body and the incorporation of trehalose into other tissues that require a carbon source, thereby regulating trehalose levels in the hemolymph. This is Facilitated trehalose transporter Tret1 from Drosophila persimilis (Fruit fly).